Here is a 230-residue protein sequence, read N- to C-terminus: MAKDTTGRLHVTVKTGGKRKLSSKLWLERQLNDPYVAQAKRDGWRSRASFKLIEMDDKHRFLKPGMTVVDLGAAPGGWSQVAAKRVGAAEGKGRVIAIDLLEMPEIVGVTFARLDFLDDSAPDKLLAMMDGAADVVLSDMAANTTGHRKTDQLRIVGLVESAAAFTSDVLRPGGTFIAKVFQSGADAGLLVQLKRDFQTVRHVKPAASRQDSSERYVMATGFRGGRRDKC.

Residues G76, W78, D99, D115, and D139 each coordinate S-adenosyl-L-methionine. K179 functions as the Proton acceptor in the catalytic mechanism.

Belongs to the class I-like SAM-binding methyltransferase superfamily. RNA methyltransferase RlmE family.

It localises to the cytoplasm. It catalyses the reaction uridine(2552) in 23S rRNA + S-adenosyl-L-methionine = 2'-O-methyluridine(2552) in 23S rRNA + S-adenosyl-L-homocysteine + H(+). Its function is as follows. Specifically methylates the uridine in position 2552 of 23S rRNA at the 2'-O position of the ribose in the fully assembled 50S ribosomal subunit. In Nitrobacter winogradskyi (strain ATCC 25391 / DSM 10237 / CIP 104748 / NCIMB 11846 / Nb-255), this protein is Ribosomal RNA large subunit methyltransferase E.